We begin with the raw amino-acid sequence, 70 residues long: uncharacterized protein (70 aa).

This is an uncharacterized protein from Bacillus subtilis (strain 168).